The chain runs to 224 residues: Cytidylate kinase (224 aa).

Residue 11-19 (GPASAGKST) participates in ATP binding.

Belongs to the cytidylate kinase family. Type 1 subfamily.

It localises to the cytoplasm. It carries out the reaction CMP + ATP = CDP + ADP. The enzyme catalyses dCMP + ATP = dCDP + ADP. The protein is Cytidylate kinase of Ligilactobacillus salivarius (strain UCC118) (Lactobacillus salivarius).